The sequence spans 94 residues: Pyrimidine/purine nucleoside phosphorylase (94 aa).

This sequence belongs to the nucleoside phosphorylase PpnP family.

The catalysed reaction is a purine D-ribonucleoside + phosphate = a purine nucleobase + alpha-D-ribose 1-phosphate. The enzyme catalyses adenosine + phosphate = alpha-D-ribose 1-phosphate + adenine. It catalyses the reaction cytidine + phosphate = cytosine + alpha-D-ribose 1-phosphate. It carries out the reaction guanosine + phosphate = alpha-D-ribose 1-phosphate + guanine. The catalysed reaction is inosine + phosphate = alpha-D-ribose 1-phosphate + hypoxanthine. The enzyme catalyses thymidine + phosphate = 2-deoxy-alpha-D-ribose 1-phosphate + thymine. It catalyses the reaction uridine + phosphate = alpha-D-ribose 1-phosphate + uracil. It carries out the reaction xanthosine + phosphate = alpha-D-ribose 1-phosphate + xanthine. In terms of biological role, catalyzes the phosphorolysis of diverse nucleosides, yielding D-ribose 1-phosphate and the respective free bases. Can use uridine, adenosine, guanosine, cytidine, thymidine, inosine and xanthosine as substrates. Also catalyzes the reverse reactions. This Pseudomonas fluorescens (strain ATCC BAA-477 / NRRL B-23932 / Pf-5) protein is Pyrimidine/purine nucleoside phosphorylase.